Reading from the N-terminus, the 86-residue chain is MAQYQTWEEFSRAAEKLYLADPMKARVVLKYRHSDGSLCIKVTDDLVCLVYRTDQAQDVKKIEKFHSQLMRLMVAKESRSVAMETD.

It belongs to the SRP9 family. Heterodimer with SRP14; binds RNA as heterodimer. Component of a signal recognition particle complex that consists of a 7SL RNA molecule of 300 nucleotides and six protein subunits: SRP72, SRP68, SRP54, SRP19, SRP14 and SRP9.

The protein resides in the cytoplasm. Its function is as follows. Component of the signal recognition particle (SRP) complex, a ribonucleoprotein complex that mediates the cotranslational targeting of secretory and membrane proteins to the endoplasmic reticulum (ER). SRP9 together with SRP14 and the Alu portion of the SRP RNA, constitutes the elongation arrest domain of SRP. The complex of SRP9 and SRP14 is required for SRP RNA binding. The chain is Signal recognition particle 9 kDa protein (SRP9) from Canis lupus familiaris (Dog).